A 295-amino-acid chain; its full sequence is Light-independent protochlorophyllide reductase iron-sulfur ATP-binding protein (295 aa).

ATP-binding positions include 39–44 (GIGKST) and Lys68. Position 43 (Ser43) interacts with Mg(2+). Positions 124 and 158 each coordinate [4Fe-4S] cluster. 209-210 (NR) serves as a coordination point for ATP.

The protein belongs to the NifH/BchL/ChlL family. In terms of assembly, homodimer. Protochlorophyllide reductase is composed of three subunits; ChlL, ChlN and ChlB. [4Fe-4S] cluster serves as cofactor.

It carries out the reaction chlorophyllide a + oxidized 2[4Fe-4S]-[ferredoxin] + 2 ADP + 2 phosphate = protochlorophyllide a + reduced 2[4Fe-4S]-[ferredoxin] + 2 ATP + 2 H2O. The protein operates within porphyrin-containing compound metabolism; chlorophyll biosynthesis (light-independent). In terms of biological role, component of the dark-operative protochlorophyllide reductase (DPOR) that uses Mg-ATP and reduced ferredoxin to reduce ring D of protochlorophyllide (Pchlide) to form chlorophyllide a (Chlide). This reaction is light-independent. The L component serves as a unique electron donor to the NB-component of the complex, and binds Mg-ATP. The protein is Light-independent protochlorophyllide reductase iron-sulfur ATP-binding protein of Prochlorococcus marinus (strain MIT 9312).